A 192-amino-acid chain; its full sequence is Cysteine and glycine-rich protein 1 (192 aa).

The region spanning Cys-10 to Cys-61 is the LIM zinc-binding 1 domain. The short motif at Lys-64–Lys-69 is the Nuclear localization signal element. The 52-residue stretch at Cys-118–Cys-169 folds into the LIM zinc-binding 2 domain.

Probable monomer. Interacts with ZYX. In terms of tissue distribution, most prominent in tissues that are enriched in smooth muscle cells, such as gizzard, stomach, and intestine. Lower level in the heart, no expression in liver, skeletal muscle, or brain.

The protein localises to the nucleus. It is found in the cytoplasm. Its subcellular location is the cytoskeleton. In terms of biological role, heat stable protein, that interacts with zyxin/ZYX. May be a component of a signal transduction pathway that mediates adhesion-stimulated changes in gene expression. The polypeptide is Cysteine and glycine-rich protein 1 (CSRP1) (Gallus gallus (Chicken)).